The chain runs to 1153 residues: PPi-type phosphoenolpyruvate carboxykinase 2 (1153 aa).

The stretch at 1085 to 1131 (RQKLEVAKLNKDLAYLNKTIAEKPRLVETLNKQIAAVKEELQYVSSE) forms a coiled coil.

It belongs to the PPi-type phosphoenolpyruvate carboxykinase family. In terms of assembly, monomer and trimer; forms heterotrimers with PEPCK1 and PEPCK3.

Its subcellular location is the cytoplasm. It localises to the cytosol. The catalysed reaction is oxaloacetate + diphosphate = phosphoenolpyruvate + phosphate + CO2. Functionally, inorganic pyrophosphate (PPi)-dependent phosphoenolpyruvate carboxykinase, which regulates the carbon flow of the central metabolism by fixing CO(2) to phosphoenolpyruvate to produce oxaloacetate. Can also produce pyruvate and diphosphate from phosphoenolpyruvate and phosphate. The sequence is that of PPi-type phosphoenolpyruvate carboxykinase 2 from Entamoeba histolytica (strain ATCC 30459 / HM-1:IMSS / ABRM).